The sequence spans 382 residues: Bifunctional enzyme IspD/IspF (382 aa).

Residues 1 to 226 (MTLAVLIVAA…RSTMDNIPDI (226 aa)) are 2-C-methyl-D-erythritol 4-phosphate cytidylyltransferase. The segment at 227-382 (RLGNGYDVHR…ALATATLVRA (156 aa)) is 2-C-methyl-D-erythritol 2,4-cyclodiphosphate synthase. The a divalent metal cation site is built by D233 and H235. 4-CDP-2-C-methyl-D-erythritol 2-phosphate is bound by residues 233–235 (DVH) and 259–260 (HS). H267 is an a divalent metal cation binding site. Residues 281-283 (DIG), 357-360 (TTSE), F364, and R367 each bind 4-CDP-2-C-methyl-D-erythritol 2-phosphate.

In the N-terminal section; belongs to the IspD/TarI cytidylyltransferase family. IspD subfamily. The protein in the C-terminal section; belongs to the IspF family. It depends on a divalent metal cation as a cofactor.

The catalysed reaction is 2-C-methyl-D-erythritol 4-phosphate + CTP + H(+) = 4-CDP-2-C-methyl-D-erythritol + diphosphate. It catalyses the reaction 4-CDP-2-C-methyl-D-erythritol 2-phosphate = 2-C-methyl-D-erythritol 2,4-cyclic diphosphate + CMP. It participates in isoprenoid biosynthesis; isopentenyl diphosphate biosynthesis via DXP pathway; isopentenyl diphosphate from 1-deoxy-D-xylulose 5-phosphate: step 2/6. The protein operates within isoprenoid biosynthesis; isopentenyl diphosphate biosynthesis via DXP pathway; isopentenyl diphosphate from 1-deoxy-D-xylulose 5-phosphate: step 4/6. Its function is as follows. Bifunctional enzyme that catalyzes the formation of 4-diphosphocytidyl-2-C-methyl-D-erythritol from CTP and 2-C-methyl-D-erythritol 4-phosphate (MEP) (IspD), and catalyzes the conversion of 4-diphosphocytidyl-2-C-methyl-D-erythritol 2-phosphate (CDP-ME2P) to 2-C-methyl-D-erythritol 2,4-cyclodiphosphate (ME-CPP) with a corresponding release of cytidine 5-monophosphate (CMP) (IspF). This is Bifunctional enzyme IspD/IspF from Ruegeria sp. (strain TM1040) (Silicibacter sp.).